A 317-amino-acid chain; its full sequence is MSQPTPAVRTFQDLILALQQYWAEQGCVVLQPYDMEVGAGTFHTATFLRAIGPETWNAAYVQPSRRPTDGRYGENPNRLQHYYQFQVVLKPNPDNFQELYLGSLKHVGLDPLVHDIRFVEDNWESPTLGAWGLGWEVWLNGMEVTQFTYFQQAGGIECYPVTGEITYGLERLAMYLQGVDSVYDLVWADGPFGKVTYGDVFHQNEVEQSTYNFEHANVDKLFELFDFYESEAKRLIELDQPLPLPSYEMVLKASHTFNLLDARRAISVTARQQYILRVRTLARSVAQAYLLARAKLGFPMATPDLRDEVLAKLEAAQ.

Belongs to the class-II aminoacyl-tRNA synthetase family. In terms of assembly, tetramer of two alpha and two beta subunits.

The protein resides in the cytoplasm. It carries out the reaction tRNA(Gly) + glycine + ATP = glycyl-tRNA(Gly) + AMP + diphosphate. This is Glycine--tRNA ligase alpha subunit from Pseudomonas fluorescens (strain SBW25).